Consider the following 321-residue polypeptide: Taste receptor type 2 member 135 (321 aa).

Over 1-28 the chain is Extracellular; sequence MGPIMSTGETSTAHTVLGCQITDKTVIT. Residues 29-49 traverse the membrane as a helical segment; that stretch reads LFVILVFSCLVAVVGNGFIII. Over 50–75 the chain is Cytoplasmic; it reads ALGMKWLLRRTLSAHNKLLISLAASR. Residues 76-96 traverse the membrane as a helical segment; that stretch reads FCLQCVVIGKNIYVFLNPSSF. Residues 97-106 are Extracellular-facing; that stretch reads PYNPVIQLLN. Residues 107-127 traverse the membrane as a helical segment; the sequence is LMWDFLTAATIWFCSLLGFFY. Residues 128-149 lie on the Cytoplasmic side of the membrane; the sequence is CVKIATLTHPVFVWLKYRLPGW. Residues 150 to 170 form a helical membrane-spanning segment; that stretch reads VPWMLLSAVGMSSLTSILCFI. Residues 171 to 207 are Extracellular-facing; it reads GNHMIYQNYARRGHQPWNATGNSLRHSLEKFYFISIK. Asn-188 is a glycosylation site (N-linked (GlcNAc...) asparagine). The helical transmembrane segment at 208–228 threads the bilayer; that stretch reads IIMWTVPTVIFSIFMSLLLVS. Over 229-253 the chain is Cytoplasmic; it reads LVRHMKKTLLALSELRDVWAQAHFK. A helical transmembrane segment spans residues 254–274; that stretch reads ALLPLLSFIILFISCFLTLVL. Over 275–286 the chain is Extracellular; sequence SSASSTPYQEFR. A helical transmembrane segment spans residues 287–307; the sequence is YWMWQVVIHLCTVIHPIVILL. Over 308–321 the chain is Cytoplasmic; that stretch reads SNPVLRVVMKRGCC.

The protein belongs to the G-protein coupled receptor T2R family.

It localises to the membrane. In terms of biological role, putative taste receptor which may play a role in the perception of bitterness. This chain is Taste receptor type 2 member 135, found in Rattus norvegicus (Rat).